The chain runs to 400 residues: D(3) dopamine receptor (400 aa).

The Extracellular portion of the chain corresponds to 1-32; the sequence is MASLSQLSGHLNYTCGAENSTGASQARPHAYY. N-linked (GlcNAc...) asparagine glycosylation is found at Asn-12 and Asn-19. A helical transmembrane segment spans residues 33 to 55; it reads ALSYCALILAIVFGNGLVCMAVL. At 56–65 the chain is on the cytoplasmic side; the sequence is KERALQTTTN. A helical transmembrane segment spans residues 66 to 88; that stretch reads YLVVSLAVADLLVATLVMPWVVY. Topologically, residues 89–104 are extracellular; that stretch reads LEVTGGVWNFSRICCD. The N-linked (GlcNAc...) asparagine glycan is linked to Asn-97. Residues Cys-103 and Cys-181 are joined by a disulfide bond. Residues 105–126 form a helical membrane-spanning segment; that stretch reads VFVTLDVMMCTASILNLCAISI. Asp-110 lines the eticlopride pocket. Residues 127-149 lie on the Cytoplasmic side of the membrane; the sequence is DRYTAVVMPVHYQHGTGQSSCRR. A helical transmembrane segment spans residues 150–170; the sequence is VALMITAVWVLAFAVSCPLLF. Residues 171 to 187 lie on the Extracellular side of the membrane; it reads GFNTTGDPTVCSISNPD. N-linked (GlcNAc...) asparagine glycosylation is present at Asn-173. Residues 188 to 209 form a helical membrane-spanning segment; sequence FVIYSSVVSFYLPFGVTVLVYA. The Cytoplasmic segment spans residues 210 to 329; that stretch reads RIYVVLKQRR…VPLREKKATQ (120 aa). The helical transmembrane segment at 330–351 threads the bilayer; sequence MVAIVLGAFIVCWLPFFLTHVL. Phe-345 and His-349 together coordinate eticlopride. At 352-366 the chain is on the extracellular side; sequence NTHCQTCHVSPELYS. The cysteines at positions 355 and 358 are disulfide-linked. Residues 367-386 form a helical membrane-spanning segment; it reads ATTWLGYVNSALNPVIYTTF. Residues 387–400 lie on the Cytoplasmic side of the membrane; sequence NIEFRKAFLKILSC.

It belongs to the G-protein coupled receptor 1 family. Interacts with CLIC6. Interacts with GRK4. Interacts with PALM. Interacts with FLNA (via filamin repeat 21); increases PKA-mediated phosphorylation of FLNA. In terms of processing, phosphorylated by GRK4 (GRK4-alpha and GRK4-gamma). Palmitoylated. As to expression, brain.

It is found in the cell membrane. Dopamine receptor whose activity is mediated by G proteins which inhibit adenylyl cyclase. Promotes cell proliferation. The sequence is that of D(3) dopamine receptor from Homo sapiens (Human).